The following is a 213-amino-acid chain: 3,4-dihydroxy-2-butanone 4-phosphate synthase (213 aa).

D-ribulose 5-phosphate contacts are provided by residues Arg27 to Glu28, Asp32, Arg140 to Thr144, and Glu164. Glu28 contacts Mg(2+). His143 serves as a coordination point for Mg(2+).

The protein belongs to the DHBP synthase family. In terms of assembly, homodimer. The cofactor is Mg(2+). It depends on Mn(2+) as a cofactor.

It carries out the reaction D-ribulose 5-phosphate = (2S)-2-hydroxy-3-oxobutyl phosphate + formate + H(+). The protein operates within cofactor biosynthesis; riboflavin biosynthesis; 2-hydroxy-3-oxobutyl phosphate from D-ribulose 5-phosphate: step 1/1. Catalyzes the conversion of D-ribulose 5-phosphate to formate and 3,4-dihydroxy-2-butanone 4-phosphate. In Agrobacterium fabrum (strain C58 / ATCC 33970) (Agrobacterium tumefaciens (strain C58)), this protein is 3,4-dihydroxy-2-butanone 4-phosphate synthase.